Here is a 445-residue protein sequence, read N- to C-terminus: Exodeoxyribonuclease 7 large subunit (445 aa).

Belongs to the XseA family. Heterooligomer composed of large and small subunits.

Its subcellular location is the cytoplasm. It carries out the reaction Exonucleolytic cleavage in either 5'- to 3'- or 3'- to 5'-direction to yield nucleoside 5'-phosphates.. In terms of biological role, bidirectionally degrades single-stranded DNA into large acid-insoluble oligonucleotides, which are then degraded further into small acid-soluble oligonucleotides. The sequence is that of Exodeoxyribonuclease 7 large subunit from Xanthomonas euvesicatoria pv. vesicatoria (strain 85-10) (Xanthomonas campestris pv. vesicatoria).